A 280-amino-acid polypeptide reads, in one-letter code: Lysosome-associated membrane glycoprotein 5 (280 aa).

The first 29 residues, 1–29 (MDLQGRGVPSIDRLRVLLMLFHTMAQIMA), serve as a signal peptide directing secretion. The Extracellular segment spans residues 30-235 (EQEVENLSGL…PVDEREQLEE (206 aa)). Residues Asn35, Asn53, and Asn127 are each glycosylated (N-linked (GlcNAc...) asparagine). The helical transmembrane segment at 236–256 (TLPLILGLILGLVIMVTLAIY) threads the bilayer. The Cytoplasmic portion of the chain corresponds to 257-280 (HVHHKMTANQVQIPRDRSQYKHMG).

Belongs to the LAMP family. Post-translationally, glycosylated. In terms of tissue distribution, expressed in plasmocytoid dendritic cells. Expressed in suprabasal skin keratinocytes and squamous cells (at protein level). Expressed in the brain and weakly in spleen and skin. Expressed in plasmocytoid dendritic cells.

Its subcellular location is the cell membrane. It localises to the cytoplasmic vesicle. It is found in the secretory vesicle. The protein resides in the synaptic vesicle membrane. The protein localises to the endoplasmic reticulum-Golgi intermediate compartment membrane. Its subcellular location is the endosome membrane. It localises to the cytoplasmic vesicle membrane. It is found in the cell projection. The protein resides in the dendrite. The protein localises to the growth cone membrane. Its subcellular location is the early endosome membrane. It localises to the recycling endosome. Plays a role in short-term synaptic plasticity in a subset of GABAergic neurons in the brain. The chain is Lysosome-associated membrane glycoprotein 5 (LAMP5) from Homo sapiens (Human).